The primary structure comprises 387 residues: Phosphoglycerate kinase (387 aa).

Substrate is bound by residues 21–23 (DLN), R36, 59–62 (HLGR), R113, and R146. ATP-binding positions include K197, E314, and 340 to 343 (GGDT).

Belongs to the phosphoglycerate kinase family. In terms of assembly, monomer.

Its subcellular location is the cytoplasm. It carries out the reaction (2R)-3-phosphoglycerate + ATP = (2R)-3-phospho-glyceroyl phosphate + ADP. It participates in carbohydrate degradation; glycolysis; pyruvate from D-glyceraldehyde 3-phosphate: step 2/5. The sequence is that of Phosphoglycerate kinase from Pseudomonas putida (strain GB-1).